The following is a 334-amino-acid chain: NADH-ubiquinone oxidoreductase chain 1 (334 aa).

9 helical membrane-spanning segments follow: residues 4–24 (FVFL…IIVI), 82–102 (FIYV…WGVI), 115–135 (IGIL…LMSG), 161–181 (IGLI…TEIV), 187–207 (GIWF…SALA), 222–242 (ELVS…FFLA), 247–267 (IILM…SPIV), 268–288 (FFKG…LLFI), and 311–331 (LPLS…LNGL).

Belongs to the complex I subunit 1 family.

Its subcellular location is the mitochondrion inner membrane. It carries out the reaction a ubiquinone + NADH + 5 H(+)(in) = a ubiquinol + NAD(+) + 4 H(+)(out). Functionally, core subunit of the mitochondrial membrane respiratory chain NADH dehydrogenase (Complex I) that is believed to belong to the minimal assembly required for catalysis. Complex I functions in the transfer of electrons from NADH to the respiratory chain. The immediate electron acceptor for the enzyme is believed to be ubiquinone. The sequence is that of NADH-ubiquinone oxidoreductase chain 1 (ND1) from Metridium senile (Brown sea anemone).